Consider the following 484-residue polypeptide: Tubulin-like protein TubZ (484 aa).

32–33 (QK) serves as a coordination point for GTP. Asp64 lines the Mg(2+) pocket. Residues 140 to 142 (GVG), Asn213, Lys237, and Asn241 contribute to the GTP site. The tract at residues 408–484 (RKQDEEKVDI…LKTSNPFKKR (77 aa)) is required to bind TubR-DNA complex. Positions 428–484 (TFNPYNKNQGFGGASRFSGGKNSAFKRQTSEATSTQNQQEEENIISTLKTSNPFKKR) are disordered. A compositionally biased stretch (polar residues) spans 452-484 (FKRQTSEATSTQNQQEEENIISTLKTSNPFKKR).

It belongs to the FtsZ family. TubZ subfamily. As to quaternary structure, forms filaments; a 2-stranded filament forms with the non-hydrolyzable GTP-gamma-S which is probably a precursor to the 4-stranded filament that forms in the presence of GTP. The 4-stranded form binds GDP. In vivo polymerizes to form dynamic filaments that often extend from one cell pole to the other, moving in a unidirectional manner. Filaments polymerize at the plus end and depolymerize at the minus end, a process called treadmilling. Polymerization only occurs above a critical concentration, it does not require upstream tubR. The tubC DNA-TubR complex binds to TubZ. Mg(2+) serves as cofactor.

The protein localises to the cytoplasm. The enzyme catalyses GTP + H2O = GDP + phosphate + H(+). GTPase is inhibited by GTP-gamma-S, which also stabilizes filaments. Functionally, a tubulin-like, filament forming GTPase; the motor component of the type III plasmid partition system which ensures correct segregation of the pBtoxis plasmid. Filaments may seed from the centromere-like site (tubC) when bound by DNA-binding protein TubR; the tubC-TubR complex stabilizes the TubZ filament. Filaments grow at the plus end and depolymerize at the minus end, a process called treadmilling. TubR-tubC complexes track the depolymerizing minus end of the filament, probably pulling plasmid within the cell. Required for pBtoxis plasmid replication/partition. Binds the TubR-tubC complex; GTP is not required for binding to TubR-tubC. TubZ alone does not bind DNA. Has a high GTPase activity in the presence of Mg(2+); in the presence of GTP assembles into dynamic filaments which upon polymerization bind almost exclusively GDP. Filament formation is cooperative, requiring a critical concentration. Formation occurs very quickly and is followed by disassembly as GTP is consumed. This is Tubulin-like protein TubZ from Bacillus thuringiensis subsp. israelensis.